The following is a 628-amino-acid chain: FAD-linked oxidoreductase hmp9 (628 aa).

The signal sequence occupies residues M1–A29. Residues G34–D53 form a disordered region. N-linked (GlcNAc...) asparagine glycosylation is found at N80 and N133. The region spanning L152–N337 is the FAD-binding PCMH-type domain. N-linked (GlcNAc...) asparagine glycosylation is present at N356.

Belongs to the oxygen-dependent FAD-linked oxidoreductase family.

The protein operates within secondary metabolite biosynthesis. Its function is as follows. FAD-linked oxidoreductase; part of the gene cluster that mediates the biosynthesis of hypothemycin, a resorcylic acid lactone (RAL) that irreversibly inhibits a subset of protein kinases with a conserved cysteine in the ATP binding site such as human ERK2. The first step is performed by both PKSs hmp3 and hmp8 and leads to the production of 7',8'-dehydrozearalenol (DHZ). The highly reducing PKS hpm8 synthesizes the reduced hexaketide (7S,11S,2E,8E)-7,11-dihydroxy-dodeca-2,8-dienoate, which is transferred downstream to the non-reducing PKS hpm3. Hpm3 then extends the reduced hexaketide to a nonaketide, after which regioselective cyclization and macrolactonization affords DHZ. The next step is the conversion of DHZ into aigialomycin C and is performed by the O-methyltransferase hmp5, the FAD-binding monooxygenase hmp7, and the cytochrome P450 monooxygenase hmp1. The wide substrate tolerance of the hmp5 and hmp7 implies that the reactions from DHZ to aigialomycin C can occur in any order. The steps from aigialomycin C to hypothemycin are less well established. The FAD-linked oxidoreductase hmp9 presumably catalyzes oxidation of the C-6' hydroxyl to a ketone. The timing of this oxidation is important, since the resulting enone functional group is a Michael acceptor that can react spontaneously with glutathione, an abundant metabolite in fungal cells. The glutathione S-transferase hmp2 catalyzes cis-trans isomerization of the 7',8' double bond with equilibrium favoring the trans isomer. The hpm6-encoded transporter might preferentially pump hypothemycin out of the cell relative to the trans isomer aigialomycin A. The cis-to-trans isomerization may be coupled with C-4' hydroxylation, since all known hypothemycin analogs containing the enone functional group also have hydroxyl groups at both C-4' and C-5'. This chain is FAD-linked oxidoreductase hmp9, found in Hypomyces subiculosus (Nectria subiculosa).